A 1043-amino-acid chain; its full sequence is MGVQGFQEYMEKHCPSAVVPVELQKLARGSLVGGGRQRPPQSPLRLLVDAENCLHRLYGGFYTDWVSGGQWNHMLGYLGALAKACYAGNIQLFVFFNGALEKGRLHEWVKRQGNERQTAQQIVSHIQNKGTPPPKVWFLPPICMAHCIRLALLRFHIKVAQSIEDHHQEVITFCRENGFHGLVAYDSDYALCNIPYYFSAHALKLSRNGKSLTTSQYLMHEVAKQLDLNPNRFPIFAALLGNHILPDEDLAAFHWSLLGPEHPLASLKVRAHQLVLPPCDVVIKAVADYVRNIQDTNDLDAIAKDVFQHSQSRTDDKVSRFKKAIAYYRATNKPLSCPPAHYLGRPNPGGIHSMVPPYPSPQMLNIPQGSVQSRPMTGGKCVSEQNNYSNIPHEGKHTPLYERSSPINPAQSGSPNHVDSNYFPPSSASSSSENEDGNGGSANHVSGNKPTWDKGKKSEKANKKDSTEQAKAEVPSPSGSGNKGTDKKANQPGHMQIPCLLSMPTRNHMDITTPPLPQVAPEVLRVAEHRHKKGLMYPYIFHVLTKGEMKIPVTIEDEINKDLPPAAILYRPVRQYVYGVLFSLAESRKKAERLAFRKNRMPPEFYVPDYPVIIKEWAAYKGKSPQTPELVEALAFREWTCPNLKKLWLGKAVEDKNRRMRAFLACMRSDTPAMLNPANVPTHLMVLCCVLRYMVQWPGIRILRRQELDAFLAQAISPKLYEPDQLQELKIDNLDPRGIQLSALFMSGVDMAFLANDACGQPIPWEHCCPWMYFDGKLLQAKLNKATREKASLIDLCDGQVELATKVEKMRQSILEGLHFSRQNHPLPFPPPPAMPFYPAAMYPRPCGPMPPPQGRGRGFPGVQPMPSQGGKLEIAGTVVGQWAGTRRGRGRGPFPLQVVSVGGANRGRPRGVISTPIIRTFGRGGRYYGRGFKNQGPPQAKPPYATSAEEVAKELKTQSEDSKSSAVSSDGSLAENGLASEEAPASQMNGGSGEARASSNSESALSSDSKLCNTNPHLNALNADSVRHKEQPLEGAVANKEE.

Disordered stretches follow at residues 353–497 (SMVP…HMQI) and 929–1043 (YGRG…NKEE). Polar residues-rich tracts occupy residues 362-375 (QMLN…QSRP) and 405-419 (SPIN…NHVD). Composition is skewed to basic and acidic residues over residues 451-471 (TWDK…EQAK) and 951-964 (EVAK…EDSK). Residues 801–1043 (VELATKVEKM…LEGAVANKEE (243 aa)) are RNA binding. The span at 995–1010 (EARASSNSESALSSDS) shows a compositional bias: low complexity.

Belongs to the constitutive coactivator of PPAR-gamma family.

The protein localises to the cytoplasm. The protein resides in the cell membrane. In terms of biological role, may bee involved in the oxidative stress-induced survival signaling. Binds RNA. May participate in mRNA transport in the cytoplasm. The chain is Constitutive coactivator of PPAR-gamma-like protein 1 homolog (fam120a) from Xenopus tropicalis (Western clawed frog).